The chain runs to 378 residues: Schlafen family member 2 (378 aa).

The protein belongs to the Schlafen family. Mainly expressed in the thymus, lymph node and spleen.

Its subcellular location is the cytoplasm. TRNA-binding protein involved in T-cell mediated immunity. Plays a key role during the metabolic reprograming phase of activated T-cell, when T-cells produce reactive oxygen species (ROS): acts by binding tRNAs and protecting them from cleavage by the oxidative stress-activated ribonuclease angiogenin (ANG). Also required for T-cell quiescence maintenance. This Mus musculus (Mouse) protein is Schlafen family member 2.